The following is a 317-amino-acid chain: uncharacterized protein (317 aa).

Topologically, residues 1-13 (MKRVTGVFLTLLR) are cytoplasmic. The chain crosses the membrane as a helical span at residues 14 to 34 (FSQFASSVLVMSLLAYAIHAY). The Extracellular portion of the chain corresponds to 35–49 (GNRGNKKTNFTLATG). N-linked (GlcNAc...) asparagine glycosylation is present at N43. The helical transmembrane segment at 50 to 70 (VISVFYLIALGILCLALPTLI) threads the bilayer. Residue Y71 is a topological domain, cytoplasmic. A helical membrane pass occupies residues 72–92 (IGMYFCAELIVCMLWLAAFVV). Residues 93–133 (LAKAQGERSCSNTNADGLYYNPYSGQYTADSHRRACNSSQA) are Extracellular-facing. N129 carries N-linked (GlcNAc...) asparagine glycosylation. A helical transmembrane segment spans residues 134 to 154 (AIAFSGLCFVLFLISVILLGI). At 155–317 (NVLTPIRKRY…EPNRNVNQMP (163 aa)) the chain is on the cytoplasmic side. The disordered stretch occupies residues 204 to 317 (RTGDVEAGAG…EPNRNVNQMP (114 aa)). Low complexity predominate over residues 239–250 (TTTTNTRYTTTT). Residues 256–282 (RYTTNDRNPGSANVANSAVDQHAYSTD) are compositionally biased toward polar residues. A compositionally biased stretch (basic and acidic residues) spans 284–295 (SGDRSYQEKVTE). The span at 302-317 (MSGSTAEPNRNVNQMP) shows a compositional bias: polar residues.

The protein localises to the membrane. This is an uncharacterized protein from Saccharomyces cerevisiae (strain ATCC 204508 / S288c) (Baker's yeast).